The sequence spans 429 residues: MKKQNNLRSLAAQAVEQVVEQGQSLSNVLPPLQQKVADKDKALLQELCFGVLRTLSQLEWLINKLMSRPMTGKQRTVHYLIMVGFYQLLYTRVPPHAALAETVEGAVSIKRPQLKGLINGVLRQFQRQQETLLNEFATSDARFLHPGWLVKRLQNAYPTQWQRIIEANNQRPPMWLRVNRTHHTRDGWLGLLEDAGMKGYPHPDYPDAVRLETPAPVHALPGFAEGWVTVQDASAQGCAVFLAPQNGEHILDLCAAPGGKTTHILEVAPEADVLAVDIDEQRLSRVYDNLKRLGMKATVKQGDGRYPAQWCGEQQFDRILLDAPCSATGVIRRHPDIKWLRRDRDIAELAQLQAEILDAVWPRLNPGGTLVYATCSVLPEENRDQIKAFLQRTPDAALSETGTPDQPGQQNLPGGEEGDGFFYAKLIKK.

Residues Cys-254 to Lys-260, Asp-277, Asp-303, and Asp-322 each bind S-adenosyl-L-methionine. Residue Cys-375 is the Nucleophile of the active site. Residues Ala-397–Asp-419 form a disordered region. Residues Glu-400–Leu-412 show a composition bias toward polar residues.

It belongs to the class I-like SAM-binding methyltransferase superfamily. RsmB/NOP family.

It is found in the cytoplasm. It carries out the reaction cytidine(967) in 16S rRNA + S-adenosyl-L-methionine = 5-methylcytidine(967) in 16S rRNA + S-adenosyl-L-homocysteine + H(+). Functionally, specifically methylates the cytosine at position 967 (m5C967) of 16S rRNA. This is Ribosomal RNA small subunit methyltransferase B from Salmonella agona (strain SL483).